Consider the following 88-residue polypeptide: Small ribosomal subunit protein bS16 (88 aa).

The protein belongs to the bacterial ribosomal protein bS16 family.

The sequence is that of Small ribosomal subunit protein bS16 from Leptospira interrogans serogroup Icterohaemorrhagiae serovar Lai (strain 56601).